A 255-amino-acid polypeptide reads, in one-letter code: 5'-nucleotidase SurE (255 aa).

A divalent metal cation contacts are provided by D8, D9, S40, and N93.

This sequence belongs to the SurE nucleotidase family. The cofactor is a divalent metal cation.

The protein resides in the cytoplasm. The catalysed reaction is a ribonucleoside 5'-phosphate + H2O = a ribonucleoside + phosphate. Its function is as follows. Nucleotidase that shows phosphatase activity on nucleoside 5'-monophosphates. This chain is 5'-nucleotidase SurE, found in Nitrobacter winogradskyi (strain ATCC 25391 / DSM 10237 / CIP 104748 / NCIMB 11846 / Nb-255).